The sequence spans 573 residues: NEDD4-binding protein 3-A (573 aa).

Disordered stretches follow at residues 168–216 (LNTM…INSL) and 382–407 (LRGE…EDSK). Polar residues-rich tracts occupy residues 184–196 (QPSN…QSES) and 207–216 (DSRQNSINSL). Residues 289-539 (VEDVARQLEE…KEIQSSYREM (251 aa)) are a coiled coil.

This sequence belongs to the N4BP3 family.

It localises to the cytoplasmic vesicle. It is found in the cell projection. The protein resides in the axon. The protein localises to the dendrite. In terms of biological role, plays a role in axon and dendrite arborization during cranial nerve development. Also important for neural crest migration and early development of other anterior structures including eye, brain and cranial cartilage. This Xenopus laevis (African clawed frog) protein is NEDD4-binding protein 3-A.